The sequence spans 83 residues: Small ribosomal subunit protein uS17 (83 aa).

It belongs to the universal ribosomal protein uS17 family. Part of the 30S ribosomal subunit.

Its function is as follows. One of the primary rRNA binding proteins, it binds specifically to the 5'-end of 16S ribosomal RNA. The protein is Small ribosomal subunit protein uS17 of Colwellia psychrerythraea (strain 34H / ATCC BAA-681) (Vibrio psychroerythus).